The primary structure comprises 238 residues: Probable solute-binding protein AdeT2 (238 aa).

The protein belongs to the bacterial solute-binding protein 7 family.

Functionally, mediates antimicrobial resistance via active efflux. Contributes to resistance to antibiotics such as chloramphenicol, erythromycin and novobiocin. May be part of a tripartite ATP-independent periplasmic (TRAP) transport system. In Acinetobacter baumannii, this protein is Probable solute-binding protein AdeT2.